The sequence spans 253 residues: Probable transcriptional regulatory protein Tpet_0454 (253 aa).

It belongs to the TACO1 family.

The protein resides in the cytoplasm. This chain is Probable transcriptional regulatory protein Tpet_0454, found in Thermotoga petrophila (strain ATCC BAA-488 / DSM 13995 / JCM 10881 / RKU-1).